A 443-amino-acid polypeptide reads, in one-letter code: Tol-Pal system protein TolB (443 aa).

A signal peptide spans 1–33; the sequence is MKIGIINTKIRTVFSAFACMIAASLVCTMPARA.

Belongs to the TolB family. In terms of assembly, the Tol-Pal system is composed of five core proteins: the inner membrane proteins TolA, TolQ and TolR, the periplasmic protein TolB and the outer membrane protein Pal. They form a network linking the inner and outer membranes and the peptidoglycan layer.

It localises to the periplasm. In terms of biological role, part of the Tol-Pal system, which plays a role in outer membrane invagination during cell division and is important for maintaining outer membrane integrity. The chain is Tol-Pal system protein TolB from Brucella suis (strain ATCC 23445 / NCTC 10510).